A 178-amino-acid chain; its full sequence is Extracellular fatty acid-binding protein (178 aa).

A signal peptide spans 1–20 (MRTLALSLALALLCLLHTEA). Residue A21 is modified to Blocked amino end (Ala). Residue T43 participates in enterobactin binding. Residues Y72 and K104 each contribute to the 1-tetradecanoyl-sn-glycerol 3-phosphate site. A disulfide bridge connects residues C80 and C173. Enterobactin-binding residues include K104, R123, and R134. 134 to 136 (RLY) contributes to the 1-tetradecanoyl-sn-glycerol 3-phosphate binding site.

The protein belongs to the calycin superfamily. Lipocalin family. Monomer. Post-translationally, does not seem to be glycosylated. In terms of tissue distribution, expressed in egg white (at protein level). Expressed in the magnum of the oviduct (at protein level). Preferentially synthesized in nonproliferating cells.

It localises to the secreted. In terms of biological role, siderocalin-like lipocalin tightly binding a variety of bacterial ferric siderophores, also binds long-chain unsaturated fatty acids such as linoleic acid, oleic acid, arachidonic acid and, with a lower affinity, long chain saturated fatty acids such as steraic acid. May act as an antibacterial factor, through dual ligand specificity, both as a siderophore-sequestrating molecule and a lysophosphatidic acid (LPA) sensor. This is Extracellular fatty acid-binding protein (EXFABP) from Gallus gallus (Chicken).